The primary structure comprises 273 residues: Vitamin B12-binding protein (273 aa).

A signal peptide spans 1-18 (MMKTLSSLLLLFSVSLQA). The region spanning 23 to 273 (RVISLAPHAT…EHFASIEQKR (251 aa)) is the Fe/B12 periplasmic-binding domain. A disulfide bridge connects residues cysteine 183 and cysteine 263.

It belongs to the BtuF family. In terms of assembly, the complex is composed of two ATP-binding proteins (BtuD), two transmembrane proteins (BtuC) and a solute-binding protein (BtuF).

It localises to the periplasm. Its function is as follows. Part of the ABC transporter complex BtuCDF involved in vitamin B12 import. Binds vitamin B12 and delivers it to the periplasmic surface of BtuC. In Vibrio vulnificus (strain CMCP6), this protein is Vitamin B12-binding protein.